Here is a 132-residue protein sequence, read N- to C-terminus: Holo-[acyl-carrier-protein] synthase (132 aa).

Residues Asp8 and Glu62 each contribute to the Mg(2+) site.

The protein belongs to the P-Pant transferase superfamily. AcpS family. Mg(2+) serves as cofactor.

The protein resides in the cytoplasm. It catalyses the reaction apo-[ACP] + CoA = holo-[ACP] + adenosine 3',5'-bisphosphate + H(+). Functionally, transfers the 4'-phosphopantetheine moiety from coenzyme A to a Ser of acyl-carrier-protein. This is Holo-[acyl-carrier-protein] synthase from Methylibium petroleiphilum (strain ATCC BAA-1232 / LMG 22953 / PM1).